We begin with the raw amino-acid sequence, 198 residues long: Na(+)-translocating NADH-quinone reductase subunit E (198 aa).

6 helical membrane-spanning segments follow: residues 11 to 31 (AVFI…FLAV), 35 to 55 (VTTA…SVPA), 77 to 97 (FLNF…LEMI), 109 to 129 (LGIF…VSFM), 140 to 160 (IVYG…LASI), and 176 to 196 (LGIT…FSGV).

It belongs to the NqrDE/RnfAE family. As to quaternary structure, composed of six subunits; NqrA, NqrB, NqrC, NqrD, NqrE and NqrF.

It localises to the cell inner membrane. It carries out the reaction a ubiquinone + n Na(+)(in) + NADH + H(+) = a ubiquinol + n Na(+)(out) + NAD(+). NQR complex catalyzes the reduction of ubiquinone-1 to ubiquinol by two successive reactions, coupled with the transport of Na(+) ions from the cytoplasm to the periplasm. NqrA to NqrE are probably involved in the second step, the conversion of ubisemiquinone to ubiquinol. In Photorhabdus laumondii subsp. laumondii (strain DSM 15139 / CIP 105565 / TT01) (Photorhabdus luminescens subsp. laumondii), this protein is Na(+)-translocating NADH-quinone reductase subunit E.